The sequence spans 203 residues: Glycerol-3-phosphate acyltransferase (203 aa).

The next 5 membrane-spanning stretches (helical) occupy residues 10–30, 60–80, 88–108, 118–138, and 162–182; these read LLLGLTALLAYLLGSVPFGIM, LAAFLTLVLDAGKGAIAVFLA, AAQLAGFAAFLGHCFPVFLGF, LGTLLALAWPIGLAACAIWAI, and FTLGLPSAVVFCAALATLIFL.

This sequence belongs to the PlsY family. Probably interacts with PlsX.

Its subcellular location is the cell inner membrane. It catalyses the reaction an acyl phosphate + sn-glycerol 3-phosphate = a 1-acyl-sn-glycero-3-phosphate + phosphate. It functions in the pathway lipid metabolism; phospholipid metabolism. Catalyzes the transfer of an acyl group from acyl-phosphate (acyl-PO(4)) to glycerol-3-phosphate (G3P) to form lysophosphatidic acid (LPA). This enzyme utilizes acyl-phosphate as fatty acyl donor, but not acyl-CoA or acyl-ACP. The polypeptide is Glycerol-3-phosphate acyltransferase (Jannaschia sp. (strain CCS1)).